The following is a 152-amino-acid chain: MDSSPLVRPVETTDSASWLSMRCELWPDGTCQEHQSEIAEFLSGKVARPAAVLIAVAPDGEALGFAELSIRPYAEECYSGNVAFLEGWYVVPSARRQGVGVALVKAAEHWARGRGCTEFASDTQLTNSASTSAHLAAGFTEVAQVRCFRKPL.

In terms of domain architecture, N-acetyltransferase spans 5–152 (PLVRPVETTD…AQVRCFRKPL (148 aa)). The substrate site is built by tryptophan 26, tyrosine 73, glutamate 86, and aspartate 122. Asparagine 127 is an acetyl-CoA binding site.

Homodimer.

It carries out the reaction kanamycin B + acetyl-CoA = N(6')-acetylkanamycin B + CoA + H(+). In terms of biological role, catalyzes the transfer of an acetyl group from acetyl-CoA to the 6'-amino group of aminoglycoside molecules conferring resistance to antibiotics containing the purpurosamine ring including amikacin. The polypeptide is Aminoglycoside N(6')-acetyltransferase type 1 (aacA7) (Klebsiella aerogenes (Enterobacter aerogenes)).